A 115-amino-acid polypeptide reads, in one-letter code: Large ribosomal subunit protein bL19 (115 aa).

Belongs to the bacterial ribosomal protein bL19 family.

In terms of biological role, this protein is located at the 30S-50S ribosomal subunit interface and may play a role in the structure and function of the aminoacyl-tRNA binding site. This Brevibacillus brevis (strain 47 / JCM 6285 / NBRC 100599) protein is Large ribosomal subunit protein bL19.